The chain runs to 589 residues: uncharacterized protein (589 aa).

14 helical membrane passes run 90-110, 128-148, 162-182, 189-209, 217-237, 245-265, 284-304, 311-331, 355-375, 390-410, 418-438, 448-468, 483-503, and 545-565; these read YIVI…QTVI, SWIG…CGIM, IVLF…LWLV, GIGG…ITPL, GCMG…GGAI, WIFF…IFFL, FVGI…LNIG, AHAN…GFVV, VMVT…YIPI, VHTL…GMGI, YPMI…IAIY, GFLA…LIAI, AFML…AVIY, and IRTI…LSFF.

The protein belongs to the major facilitator superfamily. TCR/Tet family.

The protein localises to the membrane. This is an uncharacterized protein from Schizosaccharomyces pombe (strain 972 / ATCC 24843) (Fission yeast).